Here is a 145-residue protein sequence, read N- to C-terminus: 3-dehydroquinate dehydratase (145 aa).

Y23 (proton acceptor) is an active-site residue. The substrate site is built by N74, H80, and D87. H100 serves as the catalytic Proton donor. Substrate-binding positions include 101–102 (LS) and R111.

This sequence belongs to the type-II 3-dehydroquinase family. In terms of assembly, homododecamer.

The catalysed reaction is 3-dehydroquinate = 3-dehydroshikimate + H2O. The protein operates within metabolic intermediate biosynthesis; chorismate biosynthesis; chorismate from D-erythrose 4-phosphate and phosphoenolpyruvate: step 3/7. In terms of biological role, catalyzes a trans-dehydration via an enolate intermediate. The sequence is that of 3-dehydroquinate dehydratase from Halalkalibacterium halodurans (strain ATCC BAA-125 / DSM 18197 / FERM 7344 / JCM 9153 / C-125) (Bacillus halodurans).